The primary structure comprises 201 residues: Glycolipid transfer protein (201 aa).

The glycolipid transfer protein homology domain stretch occupies residues 28 to 168 (IATTQFLEAC…KDFYAKLGDD (141 aa)).

Its function is as follows. Cargo transport protein that plays a key role in transport and secretion of liamocins, glycolipids (also called heavy oils) composed of a single mannitol or arabitol headgroup linked to either three, four or even six 3,5-dihydroxydecanoic ester tail-groups. The chain is Glycolipid transfer protein from Aureobasidium melanogenum (Aureobasidium pullulans var. melanogenum).